A 243-amino-acid chain; its full sequence is Large ribosomal subunit protein uL2 (243 aa).

2 disordered regions span residues 1–23 and 204–243; these read MGKR…PSHR and PFGG…GGRR. A compositionally biased stretch (basic residues) spans 228–243; it reads KVGHIAARKTGRGGRR.

It belongs to the universal ribosomal protein uL2 family. In terms of assembly, part of the 50S ribosomal subunit. Forms a bridge to the 30S subunit in the 70S ribosome.

Functionally, one of the primary rRNA binding proteins. Required for association of the 30S and 50S subunits to form the 70S ribosome, for tRNA binding and peptide bond formation. It has been suggested to have peptidyltransferase activity; this is somewhat controversial. Makes several contacts with the 16S rRNA in the 70S ribosome. The sequence is that of Large ribosomal subunit protein uL2 from Methanopyrus kandleri (strain AV19 / DSM 6324 / JCM 9639 / NBRC 100938).